Reading from the N-terminus, the 256-residue chain is Imidazole glycerol phosphate synthase subunit HisF (256 aa).

Active-site residues include Asp-12 and Asp-131.

This sequence belongs to the HisA/HisF family. As to quaternary structure, heterodimer of HisH and HisF.

It localises to the cytoplasm. It catalyses the reaction 5-[(5-phospho-1-deoxy-D-ribulos-1-ylimino)methylamino]-1-(5-phospho-beta-D-ribosyl)imidazole-4-carboxamide + L-glutamine = D-erythro-1-(imidazol-4-yl)glycerol 3-phosphate + 5-amino-1-(5-phospho-beta-D-ribosyl)imidazole-4-carboxamide + L-glutamate + H(+). It functions in the pathway amino-acid biosynthesis; L-histidine biosynthesis; L-histidine from 5-phospho-alpha-D-ribose 1-diphosphate: step 5/9. In terms of biological role, IGPS catalyzes the conversion of PRFAR and glutamine to IGP, AICAR and glutamate. The HisF subunit catalyzes the cyclization activity that produces IGP and AICAR from PRFAR using the ammonia provided by the HisH subunit. The polypeptide is Imidazole glycerol phosphate synthase subunit HisF (Pseudomonas fluorescens (strain Pf0-1)).